The chain runs to 462 residues: Argininosuccinate lyase (462 aa).

It belongs to the lyase 1 family. Argininosuccinate lyase subfamily.

The protein resides in the cytoplasm. It carries out the reaction 2-(N(omega)-L-arginino)succinate = fumarate + L-arginine. Its pathway is amino-acid biosynthesis; L-arginine biosynthesis; L-arginine from L-ornithine and carbamoyl phosphate: step 3/3. The polypeptide is Argininosuccinate lyase (Caldicellulosiruptor bescii (strain ATCC BAA-1888 / DSM 6725 / KCTC 15123 / Z-1320) (Anaerocellum thermophilum)).